The sequence spans 33 residues: Photosystem II reaction center protein Psb30 (33 aa).

The chain crosses the membrane as a helical span at residues 7–27 (IQLGSLTLITLTGPLIIGIIF).

Belongs to the Psb30/Ycf12 family. As to quaternary structure, PSII is composed of 1 copy each of membrane proteins PsbA, PsbB, PsbC, PsbD, PsbE, PsbF, PsbH, PsbI, PsbJ, PsbK, PsbL, PsbM, PsbT, PsbY, PsbZ, Psb30/Ycf12, peripheral proteins of the oxygen-evolving complex and a large number of cofactors. It forms dimeric complexes.

It is found in the plastid. The protein localises to the chloroplast thylakoid membrane. In terms of biological role, a core subunit of photosystem II (PSII), probably helps stabilize the reaction center. The chain is Photosystem II reaction center protein Psb30 from Euglena gracilis.